The following is a 211-amino-acid chain: Dual specificity protein phosphatase 26 (211 aa).

The region spanning Asn-60 to Gln-207 is the Tyrosine-protein phosphatase domain. The active-site Phosphocysteine intermediate is the Cys-152.

Belongs to the protein-tyrosine phosphatase family. Non-receptor class dual specificity subfamily. As to quaternary structure, interacts with HSF4.

It is found in the cytoplasm. The protein resides in the nucleus. It localises to the golgi apparatus. The enzyme catalyses O-phospho-L-tyrosyl-[protein] + H2O = L-tyrosyl-[protein] + phosphate. It carries out the reaction O-phospho-L-seryl-[protein] + H2O = L-seryl-[protein] + phosphate. It catalyses the reaction O-phospho-L-threonyl-[protein] + H2O = L-threonyl-[protein] + phosphate. Functionally, inactivates MAPK1 and MAPK3 which leads to dephosphorylation of heat shock factor protein 4 and a reduction in its DNA-binding activity. The sequence is that of Dual specificity protein phosphatase 26 (DUSP26) from Pongo abelii (Sumatran orangutan).